The chain runs to 239 residues: ATP-dependent dethiobiotin synthetase BioD (239 aa).

Residue 22 to 27 (GIGKTV) coordinates ATP. Position 26 (Thr-26) interacts with Mg(2+). Lys-47 is an active-site residue. Thr-51 lines the substrate pocket. ATP is bound by residues Asp-59, 124 to 127 (EGVG), and 184 to 185 (NR). Mg(2+) is bound by residues Asp-59 and Glu-124.

This sequence belongs to the dethiobiotin synthetase family. In terms of assembly, homodimer. Mg(2+) serves as cofactor.

It is found in the cytoplasm. It catalyses the reaction (7R,8S)-7,8-diammoniononanoate + CO2 + ATP = (4R,5S)-dethiobiotin + ADP + phosphate + 3 H(+). Its pathway is cofactor biosynthesis; biotin biosynthesis; biotin from 7,8-diaminononanoate: step 1/2. In terms of biological role, catalyzes a mechanistically unusual reaction, the ATP-dependent insertion of CO2 between the N7 and N8 nitrogen atoms of 7,8-diaminopelargonic acid (DAPA, also called 7,8-diammoniononanoate) to form a ureido ring. The polypeptide is ATP-dependent dethiobiotin synthetase BioD (Chlorobaculum tepidum (strain ATCC 49652 / DSM 12025 / NBRC 103806 / TLS) (Chlorobium tepidum)).